We begin with the raw amino-acid sequence, 456 residues long: Methylenetetrahydrofolate--tRNA-(uracil-5-)-methyltransferase TrmFO (456 aa).

11-16 (GGGLAG) serves as a coordination point for FAD.

The protein belongs to the MnmG family. TrmFO subfamily. Requires FAD as cofactor.

The protein resides in the cytoplasm. It catalyses the reaction uridine(54) in tRNA + (6R)-5,10-methylene-5,6,7,8-tetrahydrofolate + NADH + H(+) = 5-methyluridine(54) in tRNA + (6S)-5,6,7,8-tetrahydrofolate + NAD(+). The enzyme catalyses uridine(54) in tRNA + (6R)-5,10-methylene-5,6,7,8-tetrahydrofolate + NADPH + H(+) = 5-methyluridine(54) in tRNA + (6S)-5,6,7,8-tetrahydrofolate + NADP(+). In terms of biological role, catalyzes the folate-dependent formation of 5-methyl-uridine at position 54 (M-5-U54) in all tRNAs. In Synechocystis sp. (strain ATCC 27184 / PCC 6803 / Kazusa), this protein is Methylenetetrahydrofolate--tRNA-(uracil-5-)-methyltransferase TrmFO.